The chain runs to 2260 residues: Protein Ycf2 (2260 aa).

Gly1614–Ser1621 contacts ATP.

It belongs to the Ycf2 family.

It is found in the plastid. It localises to the chloroplast stroma. Its function is as follows. Probable ATPase of unknown function. Its presence in a non-photosynthetic plant (Epifagus virginiana) and experiments in tobacco indicate that it has an essential function which is probably not related to photosynthesis. This chain is Protein Ycf2, found in Dioscorea elephantipes (Elephant's foot yam).